The sequence spans 518 residues: Probable glycosyltransferase At5g03795 (518 aa).

The Cytoplasmic portion of the chain corresponds to 1 to 25 (MGDEDVDGKCKNMSACSSTTSYSTK). A helical; Signal-anchor for type II membrane protein membrane pass occupies residues 26 to 46 (LFLFMVPLVVISGFVFVNIGP). Over 47-518 (KDSTSLLTSL…RRLNVKIREV (472 aa)) the chain is Lumenal. N-linked (GlcNAc...) asparagine glycosylation is found at Asn104, Asn113, Asn120, Asn282, and Asn320.

This sequence belongs to the glycosyltransferase 47 family.

It is found in the golgi apparatus membrane. Its function is as follows. May be involved in cell wall biosynthesis. The protein is Probable glycosyltransferase At5g03795 of Arabidopsis thaliana (Mouse-ear cress).